A 258-amino-acid chain; its full sequence is Retron Ec83 putative HNH endonuclease (258 aa).

In terms of biological role, putative HNH endonuclease component of antiviral defense system retron Ec83, composed of a non-coding RNA (ncRNA), a reverse transcriptase (RT), a probable ATPase and this protein. Expression of retron Ec78 confers protection against bacteriophage T2, T4 and T6. At multiplicity of infection (MOI) of 0.02 cultures slow growth when infected with T4 but do not collapse, at MOI 2 cultures enter growth stasis. The polypeptide is Retron Ec83 putative HNH endonuclease (Escherichia coli).